Reading from the N-terminus, the 283-residue chain is Heavy metal-associated isoprenylated plant protein 3 (283 aa).

Residues 1 to 22 show a composition bias toward basic and acidic residues; it reads MGEKKNEGDNKKKGGDNKKKNE. The disordered stretch occupies residues 1 to 26; sequence MGEKKNEGDNKKKGGDNKKKNETPSI. 2 HMA domains span residues 25-88 and 132-195; these read SITV…KKKV and VTTA…KRAV. The Zn(2+) site is built by Cys-36 and Cys-39. The segment covering 82-129 has biased composition (basic and acidic residues); the sequence is EKTKKKVDLVSPQPKKEKEKENKNKNDEDKKKSEEKKKPDNNDKKPKE. The disordered stretch occupies residues 82–131; sequence EKTKKKVDLVSPQPKKEKEKENKNKNDEDKKKSEEKKKPDNNDKKPKETP. Residues Cys-143 and Cys-146 each coordinate Zn(2+). The segment covering 198–230 has biased composition (basic and acidic residues); that stretch reads VPPKKEKDKENGNENGEKKKGGGGDGGGKEKTG. Positions 198-238 are disordered; that stretch reads VPPKKEKDKENGNENGEKKKGGGGDGGGKEKTGNKGGGEGV. Position 280 is a cysteine methyl ester (Cys-280). The S-farnesyl cysteine moiety is linked to residue Cys-280. Positions 281–283 are cleaved as a propeptide — removed in mature form; the sequence is VVM.

This sequence belongs to the HIPP family.

It localises to the nucleus. The protein resides in the nucleolus. Its subcellular location is the cytoplasm. Functionally, heavy-metal-binding protein. Binds high amounts of zinc. May act as an upstream regulator of the salicylate-dependent pathogen response. Involved in abiotic stress responses, and seed and flower development. This is Heavy metal-associated isoprenylated plant protein 3 from Arabidopsis thaliana (Mouse-ear cress).